A 354-amino-acid chain; its full sequence is NADH-quinone oxidoreductase subunit H (354 aa).

8 helical membrane-spanning segments follow: residues 22–42 (ILIR…YLIL), 91–111 (YLIA…VIPF), 124–144 (LLYV…AGWA), 168–188 (MGFA…SAIV), 203–223 (ILSW…ISGV), 255–275 (LFFL…ALMF), 291–311 (IPGF…FIWI), and 326–346 (LGWK…AIWI).

It belongs to the complex I subunit 1 family. NDH-1 is composed of 14 different subunits. Subunits NuoA, H, J, K, L, M, N constitute the membrane sector of the complex.

The protein resides in the cell inner membrane. The enzyme catalyses a quinone + NADH + 5 H(+)(in) = a quinol + NAD(+) + 4 H(+)(out). Its function is as follows. NDH-1 shuttles electrons from NADH, via FMN and iron-sulfur (Fe-S) centers, to quinones in the respiratory chain. The immediate electron acceptor for the enzyme in this species is believed to be ubiquinone. Couples the redox reaction to proton translocation (for every two electrons transferred, four hydrogen ions are translocated across the cytoplasmic membrane), and thus conserves the redox energy in a proton gradient. This subunit may bind ubiquinone. This is NADH-quinone oxidoreductase subunit H from Cupriavidus taiwanensis (strain DSM 17343 / BCRC 17206 / CCUG 44338 / CIP 107171 / LMG 19424 / R1) (Ralstonia taiwanensis (strain LMG 19424)).